We begin with the raw amino-acid sequence, 662 residues long: UvrABC system protein B (662 aa).

Residues 25 to 414 (TGLNSKKRSQ…GTVVELIIRP (390 aa)) form the Helicase ATP-binding domain. ATP is bound at residue 38-45 (GITGSGKT). The Beta-hairpin motif lies at 91 to 114 (YYDYYQPESYIVRTDTFIEKDSSI). The 163-residue stretch at 430 to 592 (QVEDLISEIQ…IIPKTINRAI (163 aa)) folds into the Helicase C-terminal domain. One can recognise a UVR domain in the interval 622 to 657 (KAHMDKLKKEMFKAASNLEFEQAAKLRNQLKALEEA).

It belongs to the UvrB family. In terms of assembly, forms a heterotetramer with UvrA during the search for lesions. Interacts with UvrC in an incision complex.

Its subcellular location is the cytoplasm. The UvrABC repair system catalyzes the recognition and processing of DNA lesions. A damage recognition complex composed of 2 UvrA and 2 UvrB subunits scans DNA for abnormalities. Upon binding of the UvrA(2)B(2) complex to a putative damaged site, the DNA wraps around one UvrB monomer. DNA wrap is dependent on ATP binding by UvrB and probably causes local melting of the DNA helix, facilitating insertion of UvrB beta-hairpin between the DNA strands. Then UvrB probes one DNA strand for the presence of a lesion. If a lesion is found the UvrA subunits dissociate and the UvrB-DNA preincision complex is formed. This complex is subsequently bound by UvrC and the second UvrB is released. If no lesion is found, the DNA wraps around the other UvrB subunit that will check the other stand for damage. The protein is UvrABC system protein B of Rickettsia prowazekii (strain Madrid E).